The primary structure comprises 355 residues: MKIVADENLAFTDYFFSEFGEIQHRAGRLLTAHDVSDAEALLVRSVTKVNQALIEHSQLKFVGSATIGTDHLDISALQQQDILWSNAPGCNAQAVAEYVITALYHLDSDVFERGQDFTLGIIGLGNVGRRLAKMAALLGWNVIGCDPFVQLPDIHNLSFDDVLQKSDAISVHVPLTHSGSHPTFHLFDQHAFASMPASTILINSARGPVIEEQALIQDIYQTGRKVVLDVFEHEPVISEQLLDVVNLVTPHIAGYSLEGKARGTQMIYDAFCKVFGYEASKKFETQLPVCEPFFQQQDLKQILKAHLRAIYDIAQDDHNLRACVKDGQVDQCAFDQLRKEYPLRREWAAHGGPVA.

Positions 45 and 66 each coordinate substrate. An NAD(+)-binding site is contributed by Asp-146. Residue Arg-206 is part of the active site. Asp-229 contacts NAD(+). Glu-234 is an active-site residue. The Proton donor role is filled by His-251. Gly-254 lines the NAD(+) pocket. Position 255 (Tyr-255) interacts with substrate.

Belongs to the D-isomer specific 2-hydroxyacid dehydrogenase family. PdxB subfamily. In terms of assembly, homodimer.

The protein resides in the cytoplasm. The enzyme catalyses 4-phospho-D-erythronate + NAD(+) = (R)-3-hydroxy-2-oxo-4-phosphooxybutanoate + NADH + H(+). Its pathway is cofactor biosynthesis; pyridoxine 5'-phosphate biosynthesis; pyridoxine 5'-phosphate from D-erythrose 4-phosphate: step 2/5. In terms of biological role, catalyzes the oxidation of erythronate-4-phosphate to 3-hydroxy-2-oxo-4-phosphonooxybutanoate. This is Erythronate-4-phosphate dehydrogenase from Acinetobacter baylyi (strain ATCC 33305 / BD413 / ADP1).